The chain runs to 213 residues: Transmembrane protein 186 (213 aa).

Residues 1–79 (MAALLRAVRR…FLSRLKLAQT (79 aa)) lie on the Mitochondrial matrix side of the membrane. The helical transmembrane segment at 80–100 (ALTVVALPPGYYLYSQGLLTL) threads the bilayer. The Mitochondrial intermembrane segment spans residues 101–102 (NT). Residues 103 to 123 (VCLMSGISGFALTMLCWMSYF) traverse the membrane as a helical segment. Over 124–213 (LRRLVGILYL…QVFGVHQMLK (90 aa)) the chain is Mitochondrial matrix.

Belongs to the TMEM186 family. As to quaternary structure, part of the mitochondrial complex I assembly/MCIA complex that comprises at least the core subunits TMEM126B, NDUFAF1, ECSIT and ACAD9 and complement subunits such as COA1 and TMEM186. Interacts with MT-ND3.

It localises to the mitochondrion inner membrane. As part of the MCIA complex, required for efficient assembly of the mitochondrial complex I. The protein is Transmembrane protein 186 of Homo sapiens (Human).